The following is a 37-amino-acid chain: Large ribosomal subunit protein bL36c (37 aa).

This sequence belongs to the bacterial ribosomal protein bL36 family.

It localises to the plastid. The protein localises to the chloroplast. The sequence is that of Large ribosomal subunit protein bL36c (rpl36) from Anthoceros angustus (Hornwort).